A 307-amino-acid polypeptide reads, in one-letter code: Major immediate early protein (307 aa).

The RING-type zinc finger occupies 39-92; the sequence is CAVCLETYCVQSNNIIDFLMPSECTHLFCYKCVLNMYKNAMNVPRAAVSCPMCN.

This is Major immediate early protein (PE38) from Orgyia pseudotsugata multicapsid polyhedrosis virus (OpMNPV).